We begin with the raw amino-acid sequence, 189 residues long: Large ribosomal subunit protein uL6 (189 aa).

The protein belongs to the universal ribosomal protein uL6 family. As to quaternary structure, part of the 50S ribosomal subunit.

In terms of biological role, this protein binds to the 23S rRNA, and is important in its secondary structure. It is located near the subunit interface in the base of the L7/L12 stalk, and near the tRNA binding site of the peptidyltransferase center. The polypeptide is Large ribosomal subunit protein uL6 (Bacteroides thetaiotaomicron (strain ATCC 29148 / DSM 2079 / JCM 5827 / CCUG 10774 / NCTC 10582 / VPI-5482 / E50)).